The primary structure comprises 2102 residues: Mediator of RNA polymerase II transcription subunit 13-like (2102 aa).

Disordered regions lie at residues 304-335 (SYAG…EEAQ), 432-487 (QRAC…QPSL), 514-587 (VTSS…LDPL), 689-758 (SSAV…TTSL), 776-819 (NSDE…DLHQ), and 947-1034 (SVVE…SSVE). The span at 439–450 (GHPPSAGQPPQP) shows a compositional bias: pro residues. The span at 455-467 (KMAEKLEKGDKQQ) shows a compositional bias: basic and acidic residues. Acidic residues predominate over residues 693–714 (CDEDPEQESDPYAFEEGDEEFN). 2 stretches are compositionally biased toward basic and acidic residues: residues 715–737 (FSDK…REDG) and 794–804 (AEEKFGGKEPK). Residues 947-974 (SVVEQEQSCTPQTHNTFMSNSAPPSNSG) show a composition bias toward polar residues. Positions 979 to 990 (PSPATPRISAPT) are enriched in low complexity. Residues 1015-1029 (SDLNSPASTPSTCRP) are compositionally biased toward polar residues. Short sequence motifs (LXXLL motif) lie at residues 1165-1169 (LMLLL) and 1254-1258 (LRMLL). Disordered stretches follow at residues 1451-1574 (LTQR…DGDS) and 1948-1983 (NSPT…HDES). Low complexity-rich tracts occupy residues 1458-1467 (SSSQTSSSSS), 1476-1502 (TPTT…SSSS), and 1522-1538 (GAQG…QSAG). The segment covering 1542–1552 (DATSATSQPQV) has biased composition (polar residues). Positions 1973–1983 (GTDRMESHDES) are enriched in basic and acidic residues.

The protein belongs to the Mediator complex subunit 13 family. In terms of assembly, component of the Mediator complex.

The protein resides in the nucleus. In terms of biological role, component of the Mediator complex, a coactivator involved in regulated gene transcription of nearly all RNA polymerase II-dependent genes. Mediator functions as a bridge to convey information from gene-specific regulatory proteins to the basal RNA polymerase II transcription machinery. Mediator is recruited to promoters by direct interactions with regulatory proteins and serves as a scaffold for the assembly of a functional preinitiation complex with RNA polymerase II and the general transcription factors. The chain is Mediator of RNA polymerase II transcription subunit 13-like from Danio rerio (Zebrafish).